Reading from the N-terminus, the 252-residue chain is Centromere protein V (252 aa).

The disordered stretch occupies residues 1 to 80 (MRRTRSAVAT…EEPPPAVTPA (80 aa)). Ser18 carries the post-translational modification Phosphoserine. Arg39 is subject to Omega-N-methylarginine. A compositionally biased stretch (pro residues) spans 54–64 (SAKPRPKPPPR). Thr78 is modified (phosphothreonine). The CENP-V/GFA domain maps to 125 to 237 (HTGGCHCGAV…TEEFNGSDWE (113 aa)). Zn(2+) is bound by residues Cys129, Cys131, Cys149, Cys151, Cys154, Cys193, and Cys196. Ser234 carries the phosphoserine modification.

Belongs to the Gfa family. Requires Zn(2+) as cofactor.

It is found in the chromosome. The protein resides in the centromere. It localises to the kinetochore. Its subcellular location is the nucleus. The protein localises to the cytoplasm. It is found in the cytoskeleton. The protein resides in the spindle. Required for distribution of pericentromeric heterochromatin in interphase nuclei and for centromere formation and organization, chromosome alignment and cytokinesis. This chain is Centromere protein V (Cenpv), found in Mus musculus (Mouse).